The primary structure comprises 222 residues: Cytidylate kinase (222 aa).

10 to 18 (GTSSSGKSV) lines the ATP pocket.

Belongs to the cytidylate kinase family. Type 1 subfamily.

The protein resides in the cytoplasm. It catalyses the reaction CMP + ATP = CDP + ADP. The catalysed reaction is dCMP + ATP = dCDP + ADP. The sequence is that of Cytidylate kinase from Mycoplasma capricolum subsp. capricolum (strain California kid / ATCC 27343 / NCTC 10154).